The chain runs to 226 residues: DNA mismatch repair protein MutH (226 aa).

The protein belongs to the MutH family.

Its subcellular location is the cytoplasm. Its function is as follows. Sequence-specific endonuclease that cleaves unmethylated GATC sequences. It is involved in DNA mismatch repair. This is DNA mismatch repair protein MutH from Vibrio campbellii (strain ATCC BAA-1116).